The chain runs to 704 residues: Protein arginine N-methyltransferase 7 (704 aa).

SAM-dependent MTase PRMT-type domains lie at 14–356 (ENTW…YSLW) and 366–704 (SQPA…EKSE).

This sequence belongs to the class I-like SAM-binding methyltransferase superfamily. Protein arginine N-methyltransferase family. PRMT7 subfamily.

In terms of biological role, essential arginine methyltransferase that can both catalyze the formation of omega-N monomethylarginine (MMA) and symmetrical dimethylarginine (sDMA). Specifically mediates the symmetrical dimethylation of arginine residues in the small nuclear ribonucleoproteins SmD1 and SmD3. The polypeptide is Protein arginine N-methyltransferase 7 (Art7) (Drosophila grimshawi (Hawaiian fruit fly)).